Consider the following 211-residue polypeptide: Large ribosomal subunit protein bL25 (211 aa).

A disordered region spans residues 188 to 211 (HREEEKAPEETGEAAPAPTPETGQ). The segment covering 200–211 (EAAPAPTPETGQ) has biased composition (low complexity).

This sequence belongs to the bacterial ribosomal protein bL25 family. CTC subfamily. In terms of assembly, part of the 50S ribosomal subunit; part of the 5S rRNA/L5/L18/L25 subcomplex. Contacts the 5S rRNA. Binds to the 5S rRNA independently of L5 and L18.

This is one of the proteins that binds to the 5S RNA in the ribosome where it forms part of the central protuberance. The sequence is that of Large ribosomal subunit protein bL25 from Desulforudis audaxviator (strain MP104C).